A 173-amino-acid chain; its full sequence is ATP synthase subunit delta (173 aa).

It belongs to the ATPase delta chain family. As to quaternary structure, F-type ATPases have 2 components, F(1) - the catalytic core - and F(0) - the membrane proton channel. F(1) has five subunits: alpha(3), beta(3), gamma(1), delta(1), epsilon(1). F(0) has three main subunits: a(1), b(2) and c(10-14). The alpha and beta chains form an alternating ring which encloses part of the gamma chain. F(1) is attached to F(0) by a central stalk formed by the gamma and epsilon chains, while a peripheral stalk is formed by the delta and b chains.

It is found in the cell inner membrane. Its function is as follows. F(1)F(0) ATP synthase produces ATP from ADP in the presence of a proton or sodium gradient. F-type ATPases consist of two structural domains, F(1) containing the extramembraneous catalytic core and F(0) containing the membrane proton channel, linked together by a central stalk and a peripheral stalk. During catalysis, ATP synthesis in the catalytic domain of F(1) is coupled via a rotary mechanism of the central stalk subunits to proton translocation. In terms of biological role, this protein is part of the stalk that links CF(0) to CF(1). It either transmits conformational changes from CF(0) to CF(1) or is implicated in proton conduction. This is ATP synthase subunit delta from Campylobacter jejuni subsp. doylei (strain ATCC BAA-1458 / RM4099 / 269.97).